The primary structure comprises 267 residues: Ubiquinone biosynthesis protein COQ4 homolog, mitochondrial (267 aa).

H170, D171, H174, and E186 together coordinate Zn(2+).

It belongs to the COQ4 family. Component of a multi-subunit COQ enzyme complex. It depends on Zn(2+) as a cofactor.

It localises to the mitochondrion inner membrane. The catalysed reaction is a 4-hydroxy-3-methoxy-5-(all-trans-polyprenyl)benzoate + H(+) = a 2-methoxy-6-(all-trans-polyprenyl)phenol + CO2. The protein operates within cofactor biosynthesis; ubiquinone biosynthesis. Lyase that catalyzes the C1-decarboxylation of 4-hydroxy-3-methoxy-5-(all-trans-polyprenyl)benzoic acid into 2-methoxy-6-(all-trans-polyprenyl)phenol during ubiquinone biosynthesis. The chain is Ubiquinone biosynthesis protein COQ4 homolog, mitochondrial from Drosophila pseudoobscura pseudoobscura (Fruit fly).